Consider the following 1019-residue polypeptide: Sca1 complex protein phr (1019 aa).

Disordered stretches follow at residues 89 to 118 (IVINSSSSSSSSSSHHPHHQKTPSNSSSNF), 131 to 202 (AFNN…INNN), 265 to 287 (QQLNQNGGSNNGSTSNSTSNSAN), and 512 to 546 (STNNNNSGNNSNNNNGNSNGNSSNNNSNNNSTNNL). Residues 93-102 (SSSSSSSSSS) show a composition bias toward low complexity. Residues 141-155 (NRKEKEKDKDKDHQD) are compositionally biased toward basic and acidic residues. Residues 158 to 188 (NINNINNINNNINNNINNNNNNNNNNNNNNN) are a coiled coil. Residues 158–202 (NINNINNINNNINNNINNNNNNNNNNNNNNNMHNPTSSSPSINNN) show a composition bias toward low complexity. The PH domain occupies 735–836 (EIKKKGYLFK…WIKAIKFNCF (102 aa)). A compositionally biased stretch (low complexity) spans 860-872 (VAGSGSNNGNNNG). Disordered stretches follow at residues 860 to 890 (VAGSGSNNGNNNGHLKRSDTTQQLNNSGSFI), 904 to 951 (NLSI…QQQL), and 977 to 1019 (SSYT…SKLK). The segment covering 879 to 890 (TTQQLNNSGSFI) has biased composition (polar residues). A compositionally biased stretch (low complexity) spans 977-986 (SSYTDSMSGS). Residues 987 to 1019 (PPDSNGQVFPQSPQLKKTLFQRTTSFSKGSKLK) show a composition bias toward polar residues.

As to quaternary structure, component of the Sca1 complex composed of at least gefA, gefH, scaA, phr, and the protein phosphatase 2A subunits pppA and pho2B. Interacts directly with gefH.

The protein resides in the cell membrane. Functionally, component of the Sca1 complex, a regulator of cell motility, chemotaxis and signal relay. The Sca1 complex is recruited to the plasma membrane in a chemoattractant- and F-actin-dependent manner and is enriched at the leading edge of chemotaxing cells where it regulates F-actin dynamics and signal relay by controlling the activation of rasC and the downstream target of rapamycin complex 2 (TORC2)-Akt/protein kinase B (PKB) pathway. This chain is Sca1 complex protein phr, found in Dictyostelium discoideum (Social amoeba).